The chain runs to 786 residues: LPS-assembly protein LptD (786 aa).

An N-terminal signal peptide occupies residues 1 to 39; that stretch reads MPPKPLFPNVFPGDGAPRKRRLALALLAVPGLVPAVSYA.

The protein belongs to the LptD family. As to quaternary structure, component of the lipopolysaccharide transport and assembly complex. Interacts with LptE and LptA.

The protein resides in the cell outer membrane. Its function is as follows. Together with LptE, is involved in the assembly of lipopolysaccharide (LPS) at the surface of the outer membrane. This Burkholderia ambifaria (strain ATCC BAA-244 / DSM 16087 / CCUG 44356 / LMG 19182 / AMMD) (Burkholderia cepacia (strain AMMD)) protein is LPS-assembly protein LptD.